Consider the following 150-residue polypeptide: MKVAILSGSVYGTAEEVARHAQKLLSAAGLEASHLPRASLDELKAFAPEAFLVVTSTTGMGELPDNLQPLYYAIRDQLPAWHGLPGGVIGLGDSSYGDTFCGGGEQVRELFGELGVREVLPMLRLDASETVTPETDAEPWLAEFAAALKG.

The region spanning 3 to 145 (VAILSGSVYG…DAEPWLAEFA (143 aa)) is the Flavodoxin-like domain.

It belongs to the flavodoxin family. MioC subfamily. It depends on FMN as a cofactor.

Probable electron transporter. This is an uncharacterized protein from Pseudomonas aeruginosa (strain ATCC 15692 / DSM 22644 / CIP 104116 / JCM 14847 / LMG 12228 / 1C / PRS 101 / PAO1).